Here is a 305-residue protein sequence, read N- to C-terminus: Virulence plasmid integrase pGP7-D (305 aa).

The Core-binding (CB) domain occupies 13 to 99 (LTFGEASEIW…CYISFTKFLY (87 aa)). One can recognise a Tyr recombinase domain in the interval 127 to 303 (VKTVSISKKE…GNSSVANIPT (177 aa)). Active-site residues include Lys-188 and Arg-257. Tyr-289 functions as the O-(3'-phospho-DNA)-tyrosine intermediate in the catalytic mechanism.

This sequence belongs to the 'phage' integrase family.

The chain is Virulence plasmid integrase pGP7-D from Chlamydia muridarum (strain MoPn / Nigg).